The following is a 525-amino-acid chain: Nucleolar complex protein 4 homolog B (525 aa).

Residues 1 to 10 (MAARKAKHAF) show a composition bias toward basic residues. The tract at residues 1–21 (MAARKAKHAFRSQATQSDAER) is disordered. 3 helical membrane-spanning segments follow: residues 307–327 (AAYDVGGAISLLALNGLFILI), 358–378 (FFHLANLFLSSTHLPVYLVAA), and 386–406 (LALTAPPQVLLMIIPFICNLI).

The protein belongs to the CBF/MAK21 family.

The protein resides in the nucleus membrane. The protein localises to the nucleus. It localises to the nucleolus. In Xenopus laevis (African clawed frog), this protein is Nucleolar complex protein 4 homolog B (noc4l-b).